We begin with the raw amino-acid sequence, 239 residues long: Ribonuclease PH (239 aa).

Residues Arg86 and 124-126 (GTR) contribute to the phosphate site.

This sequence belongs to the RNase PH family. Homohexameric ring arranged as a trimer of dimers.

The catalysed reaction is tRNA(n+1) + phosphate = tRNA(n) + a ribonucleoside 5'-diphosphate. Functionally, phosphorolytic 3'-5' exoribonuclease that plays an important role in tRNA 3'-end maturation. Removes nucleotide residues following the 3'-CCA terminus of tRNAs; can also add nucleotides to the ends of RNA molecules by using nucleoside diphosphates as substrates, but this may not be physiologically important. Probably plays a role in initiation of 16S rRNA degradation (leading to ribosome degradation) during starvation. In Aromatoleum aromaticum (strain DSM 19018 / LMG 30748 / EbN1) (Azoarcus sp. (strain EbN1)), this protein is Ribonuclease PH.